Here is a 799-residue protein sequence, read N- to C-terminus: Cadherin-8 (799 aa).

The N-terminal stretch at 1 to 29 is a signal peptide; it reads MPERLAEMLLDLWTPLIILWITLPPCIYM. The propeptide occupies 30–61; sequence APMNQSQVLMSGSPLELNSLGEEQRILNRSKR. Asparagine 33 and asparagine 57 each carry an N-linked (GlcNAc...) asparagine glycan. Cadherin domains are found at residues 62 to 167, 168 to 276, 277 to 391, 392 to 494, and 495 to 616; these read GWVW…APEF, LNGP…PPKF, AQSL…PPVF, SSPT…DNAP, and EFAS…YVLP. Residues 62-621 lie on the Extracellular side of the membrane; sequence GWVWNQMFVL…AYVLPIGLSM (560 aa). Residue asparagine 188 is glycosylated (N-linked (GlcNAc...) asparagine). Asparagine 463, asparagine 473, and asparagine 544 each carry an N-linked (GlcNAc...) asparagine glycan. The helical transmembrane segment at 622–642 threads the bilayer; the sequence is GALIAILACIILLLVIVVLFV. Residues 643–799 are Cytoplasmic-facing; the sequence is TLRRHKNEPL…YSVGESDKET (157 aa). The residue at position 795 (serine 795) is a Phosphoserine.

In terms of tissue distribution, mainly expressed in brain. Found in certain nerve cell lines, such as retinoblasts, glioma cells and neuroblasts.

It localises to the cell membrane. Its function is as follows. Cadherins are calcium-dependent cell adhesion proteins. They preferentially interact with themselves in a homophilic manner in connecting cells; cadherins may thus contribute to the sorting of heterogeneous cell types. The polypeptide is Cadherin-8 (CDH8) (Homo sapiens (Human)).